The following is a 155-amino-acid chain: Large ribosomal subunit protein uL22c (155 aa).

Belongs to the universal ribosomal protein uL22 family. In terms of assembly, part of the 50S ribosomal subunit.

It is found in the plastid. Its subcellular location is the chloroplast. This protein binds specifically to 23S rRNA. Functionally, the globular domain of the protein is located near the polypeptide exit tunnel on the outside of the subunit, while an extended beta-hairpin is found that lines the wall of the exit tunnel in the center of the 70S ribosome. The polypeptide is Large ribosomal subunit protein uL22c (rpl22) (Nicotiana sylvestris (Wood tobacco)).